We begin with the raw amino-acid sequence, 487 residues long: GTPase Der (487 aa).

The 165-residue stretch at 2 to 166 (LKIAILGRPN…RIKLVANLPE (165 aa)) folds into the EngA-type G 1 domain. Residues 8–15 (GRPNVGKS), 55–59 (DTGGV), and 118–121 (NKAD) contribute to the GTP site. Positions 165 to 194 (PEPREEEEEGLEELSVDEHEESEAALPSNT) are disordered. Residues 168–187 (REEEEEGLEELSVDEHEESE) are compositionally biased toward acidic residues. An EngA-type G 2 domain is found at 225-398 (LKIALIGRPN…AIDELHHVVS (174 aa)). Residues 231–238 (GRPNVGKS), 278–282 (DTAGL), and 343–346 (NKWD) contribute to the GTP site. The KH-like domain occupies 399-483 (NKVPTPIVNK…PFDLEFKEKP (85 aa)).

The protein belongs to the TRAFAC class TrmE-Era-EngA-EngB-Septin-like GTPase superfamily. EngA (Der) GTPase family. Associates with the 50S ribosomal subunit.

In terms of biological role, GTPase that plays an essential role in the late steps of ribosome biogenesis. This chain is GTPase Der, found in Chlamydia pneumoniae (Chlamydophila pneumoniae).